The sequence spans 234 residues: Thiamine import ATP-binding protein ThiQ (234 aa).

The ABC transporter domain occupies 2–230; sequence LTLQQVHYYY…HSHPELVEFF (229 aa). Residue 32 to 39 coordinates ATP; the sequence is GPSGAGKS.

Belongs to the ABC transporter superfamily. Thiamine importer (TC 3.A.1.19.1) family. In terms of assembly, the complex is composed of two ATP-binding proteins (ThiQ), two transmembrane proteins (ThiP) and a solute-binding protein (ThiB).

Its subcellular location is the cell inner membrane. It carries out the reaction thiamine(out) + ATP + H2O = thiamine(in) + ADP + phosphate + H(+). Part of the ABC transporter complex ThiBPQ involved in thiamine import. Responsible for energy coupling to the transport system. This chain is Thiamine import ATP-binding protein ThiQ, found in Vibrio vulnificus (strain CMCP6).